We begin with the raw amino-acid sequence, 451 residues long: Phosphoglucosamine mutase (451 aa).

S101 functions as the Phosphoserine intermediate in the catalytic mechanism. Mg(2+) is bound by residues S101, D240, D242, and D244. A Phosphoserine modification is found at S101.

The protein belongs to the phosphohexose mutase family. The cofactor is Mg(2+). Activated by phosphorylation.

It catalyses the reaction alpha-D-glucosamine 1-phosphate = D-glucosamine 6-phosphate. Catalyzes the conversion of glucosamine-6-phosphate to glucosamine-1-phosphate. The protein is Phosphoglucosamine mutase of Nitrosococcus oceani (strain ATCC 19707 / BCRC 17464 / JCM 30415 / NCIMB 11848 / C-107).